Reading from the N-terminus, the 431-residue chain is Enolase (431 aa).

Gln167 serves as a coordination point for (2R)-2-phosphoglycerate. The active-site Proton donor is the Glu209. Asp246, Glu290, and Asp317 together coordinate Mg(2+). (2R)-2-phosphoglycerate is bound by residues Lys342, Arg371, Ser372, and Lys393. Lys342 functions as the Proton acceptor in the catalytic mechanism.

Belongs to the enolase family. Component of the RNA degradosome, a multiprotein complex involved in RNA processing and mRNA degradation. Requires Mg(2+) as cofactor.

It is found in the cytoplasm. The protein localises to the secreted. It localises to the cell surface. The catalysed reaction is (2R)-2-phosphoglycerate = phosphoenolpyruvate + H2O. The protein operates within carbohydrate degradation; glycolysis; pyruvate from D-glyceraldehyde 3-phosphate: step 4/5. Functionally, catalyzes the reversible conversion of 2-phosphoglycerate (2-PG) into phosphoenolpyruvate (PEP). It is essential for the degradation of carbohydrates via glycolysis. The chain is Enolase from Pectobacterium atrosepticum (strain SCRI 1043 / ATCC BAA-672) (Erwinia carotovora subsp. atroseptica).